Reading from the N-terminus, the 557-residue chain is Formate--tetrahydrofolate ligase 1 (557 aa).

Thr-66–Thr-73 contributes to the ATP binding site.

The protein belongs to the formate--tetrahydrofolate ligase family.

The catalysed reaction is (6S)-5,6,7,8-tetrahydrofolate + formate + ATP = (6R)-10-formyltetrahydrofolate + ADP + phosphate. The protein operates within one-carbon metabolism; tetrahydrofolate interconversion. The polypeptide is Formate--tetrahydrofolate ligase 1 (Streptococcus sanguinis (strain SK36)).